The following is an 897-amino-acid chain: Alanine--tRNA ligase (897 aa).

4 residues coordinate Zn(2+): His591, His595, Cys695, and His699.

Belongs to the class-II aminoacyl-tRNA synthetase family. It depends on Zn(2+) as a cofactor.

It is found in the cytoplasm. The catalysed reaction is tRNA(Ala) + L-alanine + ATP = L-alanyl-tRNA(Ala) + AMP + diphosphate. In terms of biological role, catalyzes the attachment of alanine to tRNA(Ala) in a two-step reaction: alanine is first activated by ATP to form Ala-AMP and then transferred to the acceptor end of tRNA(Ala). Also edits incorrectly charged Ser-tRNA(Ala) and Gly-tRNA(Ala) via its editing domain. In Methanobrevibacter smithii (strain ATCC 35061 / DSM 861 / OCM 144 / PS), this protein is Alanine--tRNA ligase.